Consider the following 121-residue polypeptide: Basic phospholipase A2 caudoxin (121 aa).

Cystine bridges form between Cys-25-Cys-114, Cys-27-Cys-43, Cys-42-Cys-94, Cys-48-Cys-121, Cys-49-Cys-87, Cys-56-Cys-80, and Cys-74-Cys-85. Residues Tyr-26, Gly-28, and Gly-30 each contribute to the Ca(2+) site. His-46 is an active-site residue. Asp-47 provides a ligand contact to Ca(2+). Asp-88 is an active-site residue.

Belongs to the phospholipase A2 family. Group II subfamily. D49 sub-subfamily. Monomer. Requires Ca(2+) as cofactor. As to expression, expressed by the venom gland.

Its subcellular location is the secreted. It carries out the reaction a 1,2-diacyl-sn-glycero-3-phosphocholine + H2O = a 1-acyl-sn-glycero-3-phosphocholine + a fatty acid + H(+). Its function is as follows. Snake venom phospholipase A2 (PLA2) that shows anticoagulant activity and presynaptic neurotoxicity. Acts as an anticoagulant toxin by inhibiting prothrombinase complex formation. Shows about 50% of the prothrombinase complex inhibition compared to CM-IV of N.nigricollis venom. Acts as a neurotoxin by inhibiting neuromuscular transmission by blocking acetylcholine release from the nerve termini. PLA2 catalyzes the calcium-dependent hydrolysis of the 2-acyl groups in 3-sn-phosphoglycerides. This Bitis caudalis (Horned adder) protein is Basic phospholipase A2 caudoxin.